A 265-amino-acid chain; its full sequence is tRNA pseudouridine synthase A (265 aa).

Catalysis depends on D58, which acts as the Nucleophile. A substrate-binding site is contributed by Y116.

It belongs to the tRNA pseudouridine synthase TruA family. Homodimer.

It carries out the reaction uridine(38/39/40) in tRNA = pseudouridine(38/39/40) in tRNA. In terms of biological role, formation of pseudouridine at positions 38, 39 and 40 in the anticodon stem and loop of transfer RNAs. This is tRNA pseudouridine synthase A from Neisseria gonorrhoeae (strain ATCC 700825 / FA 1090).